Consider the following 190-residue polypeptide: CASP-like protein 1U3 (190 aa).

The Cytoplasmic portion of the chain corresponds to M1–C24. Residues L25–L45 form a helical membrane-spanning segment. Residues K46 to W70 are Extracellular-facing. The helical transmembrane segment at F71–L91 threads the bilayer. Over S92–D113 the chain is Cytoplasmic. The helical transmembrane segment at F114–G134 threads the bilayer. Residues K135–Q158 lie on the Extracellular side of the membrane. Residues G159–A179 traverse the membrane as a helical segment. Over S180 to H190 the chain is Cytoplasmic.

The protein belongs to the Casparian strip membrane proteins (CASP) family. As to quaternary structure, homodimer and heterodimers.

The protein localises to the cell membrane. This is CASP-like protein 1U3 from Physcomitrium patens (Spreading-leaved earth moss).